The following is a 572-amino-acid chain: DNA polymerase (572 aa).

The interval 1 to 222 (MSRKMFSCDF…LPMDKEIRKA (222 aa)) is 3'-5' exonuclease and strand displacement activities. Residues 56 to 66 (YFHNLKFDGAF) form an interaction with the primer terminal protein region. Mg(2+) contacts are provided by D142 and D166. Positions 223–226 (YRGG) are DNA-binding; Involved in the formation of a stable complex between TP and phi29 DNA polymerase. Positions 227–572 (FTWLNDKYKE…VLVDSVFTIK (346 aa)) are initiation, polymerization and pyrophosphorolytic activities. Mg(2+) is bound by residues D246 and V247. 5-methyl-UTP is bound by residues Y251, K368, and K380. Mg(2+) is bound by residues D453 and D455. Residue D455 participates in 5-methyl-UTP binding.

Belongs to the DNA polymerase type-B family. In terms of assembly, interacts with the primer terminal protein; this interaction allows the initiation of TP-primed DNA replication at both viral DNA ends. Interacts with DNA. The cofactor is Mg(2+).

The enzyme catalyses DNA(n) + a 2'-deoxyribonucleoside 5'-triphosphate = DNA(n+1) + diphosphate. In terms of biological role, polymerase responsible for protein-primed viral DNA replication by strand displacement with high processivity and fidelity. To start replication, the DNA polymerase forms a heterodimer with a free primer terminal protein (TP), recognizes the replication origins at both 5' ends of the linear chromosome, and initiates replication using as primer the OH-group of Ser-232 of the TP. This polymerase possesses three enzymatic activities: DNA synthesis (polymerase), primer terminal protein (TP) deoxynucleotidylation, which is the formation of a covalent linkage (phosphoester) between the hydroxyl group of a specific serine residue in TP and 5'-dAMP, a reaction directed by the second T at the 3' end, and 3' to 5' exonuclease activity. Exonuclease activity has a proofreading purpose. The polypeptide is DNA polymerase (G) (Bacillus phage M2 (Bacteriophage M2)).